Here is a 163-residue protein sequence, read N- to C-terminus: ADP-ribosylation factor-like protein 2-binding protein (163 aa).

The protein belongs to the ARL2BP family. In terms of assembly, interacts with GTP bound ARL2 and ARL3; the complex ARL2-ARL2BP as well as ARL2BP alone, binds to SLC25A4/ANT1. Interaction with ARL2 may be required for targeting to cilia basal body. Interacts with STAT3; interaction is enhanced with ARL2. Found in a complex with ARL2, ARL2BP and SLC25A4. Interacts with STAT2, STAT3 and STAT4. Found in a complex with ARL2BP, ARL2 and SLC25A6. Expressed in brain.

Its subcellular location is the cytoplasm. It localises to the mitochondrion intermembrane space. It is found in the cytoskeleton. The protein localises to the microtubule organizing center. The protein resides in the centrosome. Its subcellular location is the nucleus. It localises to the spindle. It is found in the cilium basal body. In terms of biological role, together with ARL2, plays a role in the nuclear translocation, retention and transcriptional activity of STAT3. May play a role as an effector of ARL2. The chain is ADP-ribosylation factor-like protein 2-binding protein (ARL2BP) from Bos taurus (Bovine).